Consider the following 439-residue polypeptide: Alpha-1,3-mannosyl-glycoprotein 4-beta-N-acetylglucosaminyltransferase-like protein MGAT4E (439 aa).

It participates in protein modification; protein glycosylation. Functionally, glycosyltransferase-like protein that may participate in the transfer of N-acetylglucosamine (GlcNAc) to the core mannose residues of N-linked glycans. The protein is Alpha-1,3-mannosyl-glycoprotein 4-beta-N-acetylglucosaminyltransferase-like protein MGAT4E of Mus musculus (Mouse).